The primary structure comprises 191 residues: Transcription factor HES-2 (191 aa).

The interval methionine 1–serine 26 is disordered. The bHLH domain maps to leucine 28–isoleucine 85. The Orange domain occupies tyrosine 97 to leucine 130. 2 stretches are compositionally biased toward polar residues: residues arginine 159–serine 173 and glutamine 182–tryptophan 191. The disordered stretch occupies residues arginine 159–tryptophan 191. The WRPW motif signature appears at tryptophan 188–tryptophan 191.

As to quaternary structure, transcription repression requires formation of a complex with a corepressor protein of the Groucho/TLE family. Homodimer, and heterodimer with the other bHLH proteins neurod1, neurod4/ath3, hes1/hairy1 and hes6r. Weakly interacts with the bHLH protein hey1/hrt1. In terms of tissue distribution, expressed in the animal half of the early cleavage stage embryo. During neurulation and organogenesis, the otic vesicles and retina are the main sites of expression; expression in otic placodes begins as early as stage 13.5, persisting in the otic vesicles at stage 30 and beyond. Also transiently expressed in the olfactory placodes. In addition, weakly expressed in primary neurons. Expression in the retina begins at stage 21, and is seen throughout the neural retina by stage 30. From stage 35 onwards, expression progressively declines in the central retina, while remaining high in the margins. At stage 41, expression becomes restricted to the ciliary marginal zone (CMZ) of the retina, the only region where retinogenesis is still occurring.

It localises to the nucleus. Transcriptional repressor. Essential in the retina to govern glial versus neuronal differentiation. Promotes gliogenesis through the inhibition of neuronal differentiation by at least two distinct mechanisms; represses proneural gene transcription, and also physically interacts with proneural proteins, including neurod1. In Xenopus laevis (African clawed frog), this protein is Transcription factor HES-2 (hes2).